The primary structure comprises 421 residues: ATP-dependent RNA helicase RhlB (421 aa).

The short motif at 9 to 37 is the Q motif element; that stretch reads QKFSDFALHPKVVEALEKKGFHNCTPIQA. In terms of domain architecture, Helicase ATP-binding spans 40 to 219; that stretch reads LPLTLAGRDV…FEQMNNAEYI (180 aa). Residue 53-60 participates in ATP binding; the sequence is AQTGTGKT. The DEAD box motif lies at 165 to 168; that stretch reads DEAD. Residues 245 to 390 form the Helicase C-terminal domain; the sequence is RLLQTLIEEE…VSKYNPDALM (146 aa). Residues 392–421 form a disordered region; it reads DLPKPLRLTRPRTGNGPRRTGAPRNRRRSG. A compositionally biased stretch (low complexity) spans 402 to 414; that stretch reads PRTGNGPRRTGAP.

Belongs to the DEAD box helicase family. RhlB subfamily. In terms of assembly, component of the RNA degradosome, which is a multiprotein complex involved in RNA processing and mRNA degradation.

The protein resides in the cytoplasm. It carries out the reaction ATP + H2O = ADP + phosphate + H(+). DEAD-box RNA helicase involved in RNA degradation. Has RNA-dependent ATPase activity and unwinds double-stranded RNA. This Escherichia fergusonii (strain ATCC 35469 / DSM 13698 / CCUG 18766 / IAM 14443 / JCM 21226 / LMG 7866 / NBRC 102419 / NCTC 12128 / CDC 0568-73) protein is ATP-dependent RNA helicase RhlB.